Consider the following 198-residue polypeptide: Holliday junction branch migration complex subunit RuvA (198 aa).

Residues 1-61 (MTLYKIGEIV…DYIQQTYGFK (61 aa)) form a domain I region. Residues 62–139 (TFKERLLFTD…KIIQNKEVKK (78 aa)) form a domain II region. The interval 140–144 (FDDIT) is flexible linker. The tract at residues 144 to 198 (TNIKELKQTLNKLGFKASDIDYAVNNISSTKELDLMVEESINLITTQMHANNQTT) is domain III.

Belongs to the RuvA family. Homotetramer. Forms an RuvA(8)-RuvB(12)-Holliday junction (HJ) complex. HJ DNA is sandwiched between 2 RuvA tetramers; dsDNA enters through RuvA and exits via RuvB. An RuvB hexamer assembles on each DNA strand where it exits the tetramer. Each RuvB hexamer is contacted by two RuvA subunits (via domain III) on 2 adjacent RuvB subunits; this complex drives branch migration. In the full resolvosome a probable DNA-RuvA(4)-RuvB(12)-RuvC(2) complex forms which resolves the HJ.

Its subcellular location is the cytoplasm. The RuvA-RuvB-RuvC complex processes Holliday junction (HJ) DNA during genetic recombination and DNA repair, while the RuvA-RuvB complex plays an important role in the rescue of blocked DNA replication forks via replication fork reversal (RFR). RuvA specifically binds to HJ cruciform DNA, conferring on it an open structure. The RuvB hexamer acts as an ATP-dependent pump, pulling dsDNA into and through the RuvAB complex. HJ branch migration allows RuvC to scan DNA until it finds its consensus sequence, where it cleaves and resolves the cruciform DNA. In Mycoplasmopsis synoviae (strain 53) (Mycoplasma synoviae), this protein is Holliday junction branch migration complex subunit RuvA.